The sequence spans 127 residues: DNA-directed RNA polymerase subunit omega (127 aa).

The protein belongs to the RNA polymerase subunit omega family. The RNAP catalytic core consists of 2 alpha, 1 beta, 1 beta' and 1 omega subunit. When a sigma factor is associated with the core the holoenzyme is formed, which can initiate transcription.

It carries out the reaction RNA(n) + a ribonucleoside 5'-triphosphate = RNA(n+1) + diphosphate. Its function is as follows. Promotes RNA polymerase assembly. Latches the N- and C-terminal regions of the beta' subunit thereby facilitating its interaction with the beta and alpha subunits. The chain is DNA-directed RNA polymerase subunit omega from Rickettsia canadensis (strain McKiel).